Consider the following 462-residue polypeptide: MSKKIDQETIVNHFKNYGFVYQNSEIYNGLANAWDFGPLGSLIKNNLKNLWLKHFIYSKKEMHLIDTNIILNPLVWKASGHIDNFSDPLIDCKECKSRFRADKLILENTKEEINEQTDSDTLIKIISDNKIKCPNCKKSNWTEIRKFNLMFDTSIGVVDDKKDLVYLRPETAQGIFINFKNIQRTQRQKLPFGVGQIGKAFRNEITPGNFIFRTREFEQMEIEYFCDKKDSPKVFDNFLESIKTFLFKTLKIHENNIKIIDYPKEELAHYSSRTVDFLYNFPHGYSELWGLADRGEFDLTAHQNLSKKSLEYLNEETKEKFVPSVIEPSVGVERLLYAILIDAYDEEKIDEENNRVVLKLIPELAPYKFAVLPLSNKLNDKAEEIFNNLILSNICTYDSSGSIGKRYRRQDAIGTPYCITVDFDTLEDECVTIRDRDSMKQIRIKIKDIDLSKVQELFKNAK.

The substrate site is built by Arg-100 and Glu-170. ATP is bound by residues 202 to 204 (RNE), 212 to 217 (FRTREF), 287 to 288 (EL), and 331 to 334 (GVER). 217-221 (FEQME) provides a ligand contact to substrate. Position 327–331 (327–331 (EPSVG)) interacts with substrate.

It belongs to the class-II aminoacyl-tRNA synthetase family. As to quaternary structure, homodimer.

Its subcellular location is the cytoplasm. It catalyses the reaction tRNA(Gly) + glycine + ATP = glycyl-tRNA(Gly) + AMP + diphosphate. Functionally, catalyzes the attachment of glycine to tRNA(Gly). The sequence is that of Glycine--tRNA ligase from Malacoplasma penetrans (strain HF-2) (Mycoplasma penetrans).